A 396-amino-acid polypeptide reads, in one-letter code: Elongation factor Tu (396 aa).

The tr-type G domain maps to 10–206 (KPHVNVGTIG…AVDAYIPTPQ (197 aa)). Residues 19–26 (GHVDHGKT) are G1. Residue 19-26 (GHVDHGKT) coordinates GTP. Thr-26 lines the Mg(2+) pocket. The G2 stretch occupies residues 60 to 64 (GITIA). The tract at residues 81-84 (DCPG) is G3. GTP-binding positions include 81 to 85 (DCPGH) and 136 to 139 (NKVD). A G4 region spans residues 136–139 (NKVD). Residues 174 to 176 (SAL) are G5.

It belongs to the TRAFAC class translation factor GTPase superfamily. Classic translation factor GTPase family. EF-Tu/EF-1A subfamily. As to quaternary structure, monomer.

It localises to the cytoplasm. It catalyses the reaction GTP + H2O = GDP + phosphate + H(+). In terms of biological role, GTP hydrolase that promotes the GTP-dependent binding of aminoacyl-tRNA to the A-site of ribosomes during protein biosynthesis. This is Elongation factor Tu from Anaeromyxobacter dehalogenans (strain 2CP-C).